Reading from the N-terminus, the 195-residue chain is Imidazoleglycerol-phosphate dehydratase (195 aa).

This sequence belongs to the imidazoleglycerol-phosphate dehydratase family.

Its subcellular location is the cytoplasm. It carries out the reaction D-erythro-1-(imidazol-4-yl)glycerol 3-phosphate = 3-(imidazol-4-yl)-2-oxopropyl phosphate + H2O. The protein operates within amino-acid biosynthesis; L-histidine biosynthesis; L-histidine from 5-phospho-alpha-D-ribose 1-diphosphate: step 6/9. The protein is Imidazoleglycerol-phosphate dehydratase of Burkholderia multivorans (strain ATCC 17616 / 249).